We begin with the raw amino-acid sequence, 256 residues long: EF-hand calcium-binding domain-containing protein 4A (256 aa).

Residues 1-10 (MAHLGSRRRM) are compositionally biased toward basic residues. Residues 1-32 (MAHLGSRRRMSPGLRTRIAHRKAHRTPPSPLI) form a disordered region. EF-hand domains lie at 41-69 (KAHE…QNEL) and 71-106 (LTPE…LLGV). The Ca(2+) site is built by Asp-84, Ser-86, Asn-88, Tyr-90, and Glu-95. Residues 190 to 235 (IRDVHHEKDTLEQALKRKETDHGREVRCLYEEMEQQIKIERERLLK) adopt a coiled-coil conformation.

It belongs to the EFCAB4 family.

The sequence is that of EF-hand calcium-binding domain-containing protein 4A (cracr2b) from Xenopus tropicalis (Western clawed frog).